Here is a 394-residue protein sequence, read N- to C-terminus: Phosphoglycerate kinase (394 aa).

Substrate contacts are provided by residues 21 to 23 (DFN), Arg-36, 59 to 62 (HLGR), Arg-118, and Arg-151. The residue at position 183 (Ser-183) is a Phosphoserine. 2 residues coordinate ATP: Lys-201 and Gly-292. Thr-299 carries the phosphothreonine modification. ATP contacts are provided by residues Glu-323 and 350–353 (GGDS).

This sequence belongs to the phosphoglycerate kinase family. Monomer.

Its subcellular location is the cytoplasm. It carries out the reaction (2R)-3-phosphoglycerate + ATP = (2R)-3-phospho-glyceroyl phosphate + ADP. It participates in carbohydrate degradation; glycolysis; pyruvate from D-glyceraldehyde 3-phosphate: step 2/5. The sequence is that of Phosphoglycerate kinase from Anoxybacillus flavithermus (strain DSM 21510 / WK1).